Reading from the N-terminus, the 640-residue chain is Protection of telomeres protein 1 (640 aa).

Belongs to the telombin family. As to quaternary structure, homodimer or homooligomer. Component of the shelterin complex (telosome) composed of TERF1, TERF2, TINF2, TERF2IP, ACD and POT1. Binds single-stranded telomeric DNA as a monomer. Associated component of the telomerase holoenzyme complex. Found in a complex with TERF1, TINF2 and TNKS1. Interacts with TNKS1. Forms heterodimers with ACD. Identified in a complex with ACD and single-stranded telomeric DNA.

The protein resides in the nucleus. The protein localises to the chromosome. It localises to the telomere. Functionally, component of the telomerase ribonucleoprotein (RNP) complex that is essential for the replication of chromosome termini. Is a component of the double-stranded telomeric DNA-binding TRF1 complex which is involved in the regulation of telomere length by cis-inhibition of telomerase. Also acts as a single-stranded telomeric DNA-binding protein and thus may act as a downstream effector of the TRF1 complex and may transduce information about telomere maintenance and/or length to the telomere terminus. Component of the shelterin complex (telosome) that is involved in the regulation of telomere length and protection. Shelterin associates with arrays of double-stranded TTAGGG repeats added by telomerase and protects chromosome ends; without its protective activity, telomeres are no longer hidden from the DNA damage surveillance and chromosome ends are inappropriately processed by DNA repair pathways. Binds to two or more telomeric single-stranded 5'-TTAGGG-3' repeats (G-strand) and with high specificity to a minimal telomeric single-stranded 5'-TAGGGTTAG-3' sequence. Binds telomeric single-stranded sequences internally or at proximity of a 3'-end. Its activity is TERT dependent but it does not increase TERT activity. The polypeptide is Protection of telomeres protein 1 (Pot1) (Mus musculus (Mouse)).